Reading from the N-terminus, the 369-residue chain is Anthranilate phosphoribosyltransferase (369 aa).

5-phospho-alpha-D-ribose 1-diphosphate contacts are provided by residues Gly85, Gly88–Asp89, Thr93, Asn95–Thr98, Lys113–Ser121, and Ser125. Gly85 is an anthranilate binding site. Ser97 contacts Mg(2+). Asn116 provides a ligand contact to anthranilate. Anthranilate is bound at residue Arg171. Mg(2+) contacts are provided by Asp229 and Glu230.

It belongs to the anthranilate phosphoribosyltransferase family. As to quaternary structure, homodimer. Mg(2+) is required as a cofactor.

The catalysed reaction is N-(5-phospho-beta-D-ribosyl)anthranilate + diphosphate = 5-phospho-alpha-D-ribose 1-diphosphate + anthranilate. It participates in amino-acid biosynthesis; L-tryptophan biosynthesis; L-tryptophan from chorismate: step 2/5. Functionally, catalyzes the transfer of the phosphoribosyl group of 5-phosphorylribose-1-pyrophosphate (PRPP) to anthranilate to yield N-(5'-phosphoribosyl)-anthranilate (PRA). This is Anthranilate phosphoribosyltransferase from Frankia alni (strain DSM 45986 / CECT 9034 / ACN14a).